A 441-amino-acid polypeptide reads, in one-letter code: Enolase (441 aa).

(2R)-2-phosphoglycerate is bound at residue Q164. E206 functions as the Proton donor in the catalytic mechanism. D243, E289, and D316 together coordinate Mg(2+). (2R)-2-phosphoglycerate is bound by residues K341, R370, S371, and K392. K341 acts as the Proton acceptor in catalysis.

This sequence belongs to the enolase family. Mg(2+) is required as a cofactor.

The protein localises to the cytoplasm. Its subcellular location is the secreted. It localises to the cell surface. It carries out the reaction (2R)-2-phosphoglycerate = phosphoenolpyruvate + H2O. It participates in carbohydrate degradation; glycolysis; pyruvate from D-glyceraldehyde 3-phosphate: step 4/5. Catalyzes the reversible conversion of 2-phosphoglycerate (2-PG) into phosphoenolpyruvate (PEP). It is essential for the degradation of carbohydrates via glycolysis. The sequence is that of Enolase from Leuconostoc mesenteroides subsp. mesenteroides (strain ATCC 8293 / DSM 20343 / BCRC 11652 / CCM 1803 / JCM 6124 / NCDO 523 / NBRC 100496 / NCIMB 8023 / NCTC 12954 / NRRL B-1118 / 37Y).